Consider the following 474-residue polypeptide: tRNA modification GTPase MnmE (474 aa).

Positions 35, 92, and 135 each coordinate (6S)-5-formyl-5,6,7,8-tetrahydrofolate. A TrmE-type G domain is found at 231–396 (GLHVVLAGQP…LRAALLEIAG (166 aa)). K(+) is bound at residue N241. Residues 241–246 (NVGKSS), 260–266 (TPIAGTT), 285–288 (DTAG), and 377–379 (SAR) each bind GTP. S245 is a Mg(2+) binding site. K(+)-binding residues include T260, I262, and T265. T266 serves as a coordination point for Mg(2+). K474 contributes to the (6S)-5-formyl-5,6,7,8-tetrahydrofolate binding site.

This sequence belongs to the TRAFAC class TrmE-Era-EngA-EngB-Septin-like GTPase superfamily. TrmE GTPase family. As to quaternary structure, homodimer. Heterotetramer of two MnmE and two MnmG subunits. The cofactor is K(+).

The protein resides in the cytoplasm. In terms of biological role, exhibits a very high intrinsic GTPase hydrolysis rate. Involved in the addition of a carboxymethylaminomethyl (cmnm) group at the wobble position (U34) of certain tRNAs, forming tRNA-cmnm(5)s(2)U34. This is tRNA modification GTPase MnmE from Ralstonia nicotianae (strain ATCC BAA-1114 / GMI1000) (Ralstonia solanacearum).